The primary structure comprises 131 residues: MTHRFRNTTFMRYLSNSRFKKKLILRKIKVSGPFVIQRTVHPQSAHNPNENCGNFDQRKVLGYFFKMFFYHNYNFVFTKLKLICLFLIISISSKKNFKLKVLILFFSIQKFTKSLDRNMSLAFDCTHKRVT.

Its subcellular location is the plastid. The protein resides in the chloroplast. This is an uncharacterized protein from Chlorella vulgaris (Green alga).